Consider the following 252-residue polypeptide: Imidazole glycerol phosphate synthase subunit HisF (252 aa).

Catalysis depends on residues D11 and D130.

It belongs to the HisA/HisF family. As to quaternary structure, heterodimer of HisH and HisF.

Its subcellular location is the cytoplasm. The enzyme catalyses 5-[(5-phospho-1-deoxy-D-ribulos-1-ylimino)methylamino]-1-(5-phospho-beta-D-ribosyl)imidazole-4-carboxamide + L-glutamine = D-erythro-1-(imidazol-4-yl)glycerol 3-phosphate + 5-amino-1-(5-phospho-beta-D-ribosyl)imidazole-4-carboxamide + L-glutamate + H(+). It participates in amino-acid biosynthesis; L-histidine biosynthesis; L-histidine from 5-phospho-alpha-D-ribose 1-diphosphate: step 5/9. Functionally, IGPS catalyzes the conversion of PRFAR and glutamine to IGP, AICAR and glutamate. The HisF subunit catalyzes the cyclization activity that produces IGP and AICAR from PRFAR using the ammonia provided by the HisH subunit. This Halothermothrix orenii (strain H 168 / OCM 544 / DSM 9562) protein is Imidazole glycerol phosphate synthase subunit HisF.